A 238-amino-acid polypeptide reads, in one-letter code: Probable transcriptional regulatory protein IL0164 (238 aa).

This sequence belongs to the TACO1 family.

It is found in the cytoplasm. This is Probable transcriptional regulatory protein IL0164 from Idiomarina loihiensis (strain ATCC BAA-735 / DSM 15497 / L2-TR).